A 610-amino-acid polypeptide reads, in one-letter code: Membrane protein insertase YidC (610 aa).

A helical transmembrane segment spans residues 7–27; that stretch reads FFITIALSILILALWQVFYLG. Residues 36 to 82 form a disordered region; it reads QARIEEQQRQAQQAAQNRQASSSTGDTPQMPANPDSIPGQGDTKAAG. Over residues 44-55 the composition is skewed to low complexity; the sequence is RQAQQAAQNRQA. Transmembrane regions (helical) follow at residues 358-378, 387-407, 458-478, 510-530, and 546-566; these read FDLL…FYLI, NFGV…FPLA, WPVL…YVTI, TVPH…TMFL, and IFTW…AGLV.

This sequence belongs to the OXA1/ALB3/YidC family. Type 1 subfamily. As to quaternary structure, interacts with the Sec translocase complex via SecD. Specifically interacts with transmembrane segments of nascent integral membrane proteins during membrane integration.

Its subcellular location is the cell inner membrane. Required for the insertion and/or proper folding and/or complex formation of integral membrane proteins into the membrane. Involved in integration of membrane proteins that insert both dependently and independently of the Sec translocase complex, as well as at least some lipoproteins. Aids folding of multispanning membrane proteins. The sequence is that of Membrane protein insertase YidC from Brucella suis biovar 1 (strain 1330).